Here is a 306-residue protein sequence, read N- to C-terminus: Non-specific ribonucleoside hydrolase RihC (306 aa).

H235 is a catalytic residue.

The protein belongs to the IUNH family. RihC subfamily.

Functionally, hydrolyzes both purine and pyrimidine ribonucleosides with a broad-substrate specificity. This is Non-specific ribonucleoside hydrolase RihC from Salmonella agona (strain SL483).